The primary structure comprises 348 residues: MKNLLGSSIKDLENIALDYGQAAFRGRQIYSWIYNYRNKNKNIDQIEVLPLDFRKKLKDDGFKVSELSFQEKKLANDGTLKLLLSTNDNESIECVGIPTEKRLTACLSSQVGCPMDCKFCATGKEGLKRSLKASEILDQILFIENEMNRKVTNIVFMGMGEPLLNIDELLLSIRSINEDFQISQRKITVSTVAVPKMMSKLSARSFQILGNCQFTLAISLHASNQKTRETIIPSAKNYEIKNIIEDSKQFVKDTGRRVSFEYLMLSGVNDKLEHANELSNLLRGFQCHVNLIQYNQIDEVEFKRASLKNLQLFQSRLSNNGITVSFRKSRGLDKNAACGQLRQNARNK.

Residue E93 is the Proton acceptor of the active site. A Radical SAM core domain is found at 99–333 (TEKRLTACLS…VSFRKSRGLD (235 aa)). The cysteines at positions 106 and 338 are disulfide-linked. [4Fe-4S] cluster contacts are provided by C113, C117, and C120. S-adenosyl-L-methionine contacts are provided by residues 160-161 (GE), S190, 219-221 (SLH), and N295. Residue C338 is the S-methylcysteine intermediate of the active site.

Belongs to the radical SAM superfamily. RlmN family. [4Fe-4S] cluster is required as a cofactor.

It is found in the cytoplasm. The catalysed reaction is adenosine(2503) in 23S rRNA + 2 reduced [2Fe-2S]-[ferredoxin] + 2 S-adenosyl-L-methionine = 2-methyladenosine(2503) in 23S rRNA + 5'-deoxyadenosine + L-methionine + 2 oxidized [2Fe-2S]-[ferredoxin] + S-adenosyl-L-homocysteine. It carries out the reaction adenosine(37) in tRNA + 2 reduced [2Fe-2S]-[ferredoxin] + 2 S-adenosyl-L-methionine = 2-methyladenosine(37) in tRNA + 5'-deoxyadenosine + L-methionine + 2 oxidized [2Fe-2S]-[ferredoxin] + S-adenosyl-L-homocysteine. Its function is as follows. Specifically methylates position 2 of adenine 2503 in 23S rRNA and position 2 of adenine 37 in tRNAs. The chain is Probable dual-specificity RNA methyltransferase RlmN from Prochlorococcus marinus (strain MIT 9312).